Consider the following 271-residue polypeptide: Enolase-phosphatase E1 (271 aa).

Mg(2+) contacts are provided by D16 and E18. Substrate-binding positions include 150-151 and K199; that span reads SS. A Mg(2+)-binding site is contributed by D226.

This sequence belongs to the HAD-like hydrolase superfamily. MasA/MtnC family. In terms of assembly, monomer. The cofactor is Mg(2+).

The protein localises to the cytoplasm. It localises to the nucleus. The catalysed reaction is 5-methylsulfanyl-2,3-dioxopentyl phosphate + H2O = 1,2-dihydroxy-5-(methylsulfanyl)pent-1-en-3-one + phosphate. Its pathway is amino-acid biosynthesis; L-methionine biosynthesis via salvage pathway; L-methionine from S-methyl-5-thio-alpha-D-ribose 1-phosphate: step 3/6. It functions in the pathway amino-acid biosynthesis; L-methionine biosynthesis via salvage pathway; L-methionine from S-methyl-5-thio-alpha-D-ribose 1-phosphate: step 4/6. Its function is as follows. Bifunctional enzyme that catalyzes the enolization of 2,3-diketo-5-methylthiopentyl-1-phosphate (DK-MTP-1-P) into the intermediate 2-hydroxy-3-keto-5-methylthiopentenyl-1-phosphate (HK-MTPenyl-1-P), which is then dephosphorylated to form the acireductone 1,2-dihydroxy-3-keto-5-methylthiopentene (DHK-MTPene). This Candida dubliniensis (strain CD36 / ATCC MYA-646 / CBS 7987 / NCPF 3949 / NRRL Y-17841) (Yeast) protein is Enolase-phosphatase E1.